We begin with the raw amino-acid sequence, 224 residues long: Protein LURP-one-related 1 (224 aa).

Positions methionine 1–lysine 23 are disordered.

This sequence belongs to the LOR family.

Might be related to the phospholipid scramblase and tubby-like superfamily of membrane tethered transcription factors. The chain is Protein LURP-one-related 1 from Arabidopsis thaliana (Mouse-ear cress).